The sequence spans 475 residues: Lactate utilization protein B (475 aa).

4Fe-4S ferredoxin-type domains lie at 304-334 and 353-382; these read GTEF…GHSY and YDDY…LHEL. The [4Fe-4S] cluster site is built by Cys-313, Cys-316, Cys-319, Cys-323, Cys-366, Cys-369, and Cys-373.

Belongs to the LutB/YkgF family.

Is involved in L-lactate degradation and allows cells to grow with lactate as the sole carbon source. Has probably a role as an electron transporter during oxidation of L-lactate. The chain is Lactate utilization protein B from Geobacillus sp. (strain WCH70).